The following is a 685-amino-acid chain: Frizzled-8 (685 aa).

The N-terminal stretch at 1–27 (MEWGYLLEVTSLLAALAVLQRSSGAAA) is a signal peptide. At 28–272 (ASAKELACQE…NPFFSQDERA (245 aa)) the chain is on the extracellular side. Positions 30–151 (AKELACQEIT…GNPDTLCMDY (122 aa)) constitute an FZ domain. 5 disulfide bridges follow: Cys35–Cys96, Cys43–Cys89, Cys80–Cys118, Cys107–Cys148, and Cys111–Cys135. Asn49 carries an N-linked (GlcNAc...) asparagine glycan. 71–78 (QFWPLVEI) contacts hexadecanoate. Residues 95–100 (ICLEDY) form a wnt-binding region. The tract at residues 147 to 152 (LCMDYN) is wnt-binding. The N-linked (GlcNAc...) asparagine glycan is linked to Asn152. The tract at residues 155–223 (DLTTAAPSPP…KARPPGGGAA (69 aa)) is disordered. Over residues 161 to 176 (PSPPRRLPPPPPPGEQ) the composition is skewed to pro residues. 2 stretches are compositionally biased toward low complexity: residues 177–187 (PPSGSGHSRPP) and 200–223 (GSGDAAAAPPSRGGKARPPGGGAA). Residues 273 to 293 (FTVFWIGLWSVLCFVSTFATV) traverse the membrane as a helical segment. The Cytoplasmic portion of the chain corresponds to 294 to 309 (STFLIDMERFKYPERP). A helical membrane pass occupies residues 310–330 (IIFLSACYLFVSVGYLVRLVA). The Extracellular portion of the chain corresponds to 331 to 394 (GHEKVACSGG…RYETTGPALC (64 aa)). Residues 395-415 (TVVFLLVYFFGMASSIWWVIL) traverse the membrane as a helical segment. Residues 416-437 (SLTWFLAAGMKWGNEAIAGYSQ) lie on the Cytoplasmic side of the membrane. A helical membrane pass occupies residues 438-458 (YFHLAAWLVPSVKSIAVLALS). Over 459-481 (SVDGDPVAGICYVGNQSLDNLRG) the chain is Extracellular. An N-linked (GlcNAc...) asparagine glycan is attached at Asn473. A helical membrane pass occupies residues 482 to 502 (FVLAPLVIYLFIGTMFLLAGF). Residues 503–530 (VSLFRIRSVIKQQGGPTKTHKLEKLMIR) are Cytoplasmic-facing. Residues 531–551 (LGLFTVLYTVPAAVVVACLFY) form a helical membrane-spanning segment. The Extracellular portion of the chain corresponds to 552-582 (EQHNRPRWEATHNCPCLRDLQPDQARRPDYA). Residues 583–603 (VFMLKYFMCLVVGITSGVWVW) traverse the membrane as a helical segment. At 604 to 685 (SGKTLESWRA…YPKQMPLSQV (82 aa)) the chain is on the cytoplasmic side. Residues 606-611 (KTLESW) carry the Lys-Thr-X-X-X-Trp motif, mediates interaction with the PDZ domain of Dvl family members motif. Over residues 631–655 (AGGSGPGGSGPGPGGGGGHGGGGGS) the composition is skewed to gly residues. The interval 631-656 (AGGSGPGGSGPGPGGGGGHGGGGGSL) is disordered. The PDZ-binding signature appears at 683-685 (SQV).

This sequence belongs to the G-protein coupled receptor Fz/Smo family. In terms of assembly, component of a Wnt-signaling complex that contains a WNT protein, a FZD protein and LRP5 or LRP6. Interacts directly with LRP5 or LRP6; the interaction is promoted by Wnt-binding and signaling and inhibited by DKK1. Interacts (via the PDZ-binding motif) with GPOC (via its PDZ domain). Interacts with RSPO1 and RSPO3. Interacts with glypican GPC3. Ubiquitinated by ZNRF3, leading to its degradation by the proteasome. As to expression, expressed in chondrocytes.

The protein resides in the membrane. Its subcellular location is the golgi apparatus. It is found in the cell membrane. In terms of biological role, receptor for Wnt proteins. Component of the Wnt-Fzd-LRP5-LRP6 complex that triggers beta-catenin signaling through inducing aggregation of receptor-ligand complexes into ribosome-sized signalosomes. The beta-catenin canonical signaling pathway leads to the activation of disheveled proteins, inhibition of GSK-3 kinase, nuclear accumulation of beta-catenin and activation of Wnt target genes. A second signaling pathway involving PKC and calcium fluxes has been seen for some family members, but it is not yet clear if it represents a distinct pathway or if it can be integrated in the canonical pathway, as PKC seems to be required for Wnt-mediated inactivation of GSK-3 kinase. Both pathways seem to involve interactions with G-proteins. May be involved in transduction and intercellular transmission of polarity information during tissue morphogenesis and/or in differentiated tissues. Coreceptor along with RYK of Wnt proteins, such as WNT1. The sequence is that of Frizzled-8 (Fzd8) from Mus musculus (Mouse).